The primary structure comprises 205 residues: Nuclear transcription factor Y subunit beta (205 aa).

The segment at 1–50 (MDGDSSTTDASQLGIAGDYIGGSHYVIQPHDDTEDSMNDHEDTNGSKESF) is a domain. The interval 24–50 (HYVIQPHDDTEDSMNDHEDTNGSKESF) is disordered. A compositionally biased stretch (basic and acidic residues) spans 37–50 (MNDHEDTNGSKESF). Residues 51–140 (REQDIYLPIA…PLKLYLQKFR (90 aa)) are b domain. The DNA-binding element occupies 57–63 (LPIANVA). The subunit association domain (SAD) stretch occupies residues 84-95 (VQECVSEFISFI). Residues 141-201 (EAMKGEKGIG…SYQQISGVQQ (61 aa)) form a c domain region.

It belongs to the NFYB/HAP3 subunit family. In terms of assembly, heterotrimeric transcription factor composed of three components, NF-YA, NF-YB and NF-YC. NF-YB and NF-YC must interact and dimerize for NF-YA association and DNA binding.

Its subcellular location is the nucleus. Its function is as follows. Component of the sequence-specific heterotrimeric transcription factor (NF-Y) which specifically recognizes a 5'-CCAAT-3' box motif found in the promoters of its target genes. NF-Y can function as both an activator and a repressor, depending on its interacting cofactors. This Gallus gallus (Chicken) protein is Nuclear transcription factor Y subunit beta (NFYB).